An 818-amino-acid chain; its full sequence is Glycerol-3-phosphate acyltransferase (818 aa).

The HXXXXD motif motif lies at 308 to 313; that stretch reads CHRSHM.

This sequence belongs to the GPAT/DAPAT family.

It is found in the cell inner membrane. It catalyses the reaction sn-glycerol 3-phosphate + an acyl-CoA = a 1-acyl-sn-glycero-3-phosphate + CoA. It participates in phospholipid metabolism; CDP-diacylglycerol biosynthesis; CDP-diacylglycerol from sn-glycerol 3-phosphate: step 1/3. In Alteromonas mediterranea (strain DSM 17117 / CIP 110805 / LMG 28347 / Deep ecotype), this protein is Glycerol-3-phosphate acyltransferase.